Consider the following 90-residue polypeptide: Probable Fe(2+)-trafficking protein (90 aa).

Belongs to the Fe(2+)-trafficking protein family.

Its function is as follows. Could be a mediator in iron transactions between iron acquisition and iron-requiring processes, such as synthesis and/or repair of Fe-S clusters in biosynthetic enzymes. This chain is Probable Fe(2+)-trafficking protein, found in Pseudomonas fluorescens (strain Pf0-1).